Reading from the N-terminus, the 216-residue chain is Sperm microtubule inner protein 8 (216 aa).

Microtubule inner protein component of sperm flagellar doublet microtubules. In terms of tissue distribution, expressed in sperm.

The protein localises to the cytoplasm. It localises to the cytoskeleton. Its subcellular location is the flagellum axoneme. Its function is as follows. Microtubule inner protein (MIP) part of the dynein-decorated doublet microtubules (DMTs) in flagellum axoneme. May serve to reinforce and thus stabilize the microtubule structure in the sperm flagella. This Bos taurus (Bovine) protein is Sperm microtubule inner protein 8 (SPMIP8).